Here is a 382-residue protein sequence, read N- to C-terminus: Succinate--CoA ligase [ADP-forming] subunit beta (382 aa).

One can recognise an ATP-grasp domain in the interval 9 to 240 (KELFSKYGVK…PRDVSEFEMY (232 aa)). Residues Lys45, 52–54 (GRG), Val94, and Glu99 contribute to the ATP site. Mg(2+) contacts are provided by Asn193 and Asp207. Substrate-binding positions include Asn260 and 317-319 (GIT).

It belongs to the succinate/malate CoA ligase beta subunit family. As to quaternary structure, heterotetramer of two alpha and two beta subunits. Mg(2+) is required as a cofactor.

It carries out the reaction succinate + ATP + CoA = succinyl-CoA + ADP + phosphate. The enzyme catalyses GTP + succinate + CoA = succinyl-CoA + GDP + phosphate. It functions in the pathway carbohydrate metabolism; tricarboxylic acid cycle; succinate from succinyl-CoA (ligase route): step 1/1. Functionally, succinyl-CoA synthetase functions in the citric acid cycle (TCA), coupling the hydrolysis of succinyl-CoA to the synthesis of either ATP or GTP and thus represents the only step of substrate-level phosphorylation in the TCA. The beta subunit provides nucleotide specificity of the enzyme and binds the substrate succinate, while the binding sites for coenzyme A and phosphate are found in the alpha subunit. This is Succinate--CoA ligase [ADP-forming] subunit beta from Pyrobaculum arsenaticum (strain DSM 13514 / JCM 11321 / PZ6).